A 128-amino-acid chain; its full sequence is uncharacterized protein (128 aa).

Residues 1 to 50 (MSNEQGKGMGFFGNKGKPASEKKDEKKTKLDLDYKPDLNPSTPYDPTLPV) form a disordered region. The segment covering 18–36 (PASEKKDEKKTKLDLDYKP) has biased composition (basic and acidic residues).

This is an uncharacterized protein from Bacillus anthracis.